The sequence spans 1217 residues: WD repeat-containing protein on Y chromosome (1217 aa).

WD repeat units follow at residues 155 to 199 (EDMT…LRSA), 323 to 362 (RIPL…EPSA), 366 to 405 (GHNG…LLQT), 456 to 495 (THAA…RKII), 508 to 547 (TIDI…VVRN), 595 to 635 (FHTD…RRYN), 740 to 779 (KVGD…IPEA), and 823 to 862 (GHLK…LGTL). 2 disordered regions span residues 910–929 (QVKR…VEDT) and 1033–1217 (AGGQ…KDKP). Residues 919-929 (EREDEGEVEDT) show a composition bias toward acidic residues. 3 stretches are compositionally biased toward polar residues: residues 1041 to 1054 (RASS…TNSI), 1085 to 1107 (FGPN…SQLK), and 1137 to 1179 (PVST…TSAN). Residues 1181-1190 (KPDIMPVKIK) show a composition bias toward low complexity. Residues 1198-1210 (RNTAPVQITTSIA) are compositionally biased toward polar residues.

The chain is WD repeat-containing protein on Y chromosome from Drosophila mojavensis (Fruit fly).